A 436-amino-acid chain; its full sequence is Repulsive guidance molecule B (436 aa).

The signal sequence occupies residues 1-48 (MGVRAAPSCAAAPAAAGAEQSRRPGLWPPSPPPPLLLLLLLSLGLLHA). Asn123 is a glycosylation site (N-linked (GlcNAc...) asparagine). 2 cysteine pairs are disulfide-bonded: Cys142–Cys229 and Cys166–Cys315. Asn386 carries an N-linked (GlcNAc...) asparagine glycan. Residue Cys415 is the site of GPI-anchor amidated cysteine attachment. Residues 416–436 (GGCRDLPVGLGLTCLILIMFL) constitute a propeptide, removed in mature form.

The protein belongs to the repulsive guidance molecule (RGM) family. Homooligomer. Interacts with DRGX. Interacts with BMP2 and BMP4. Interacts with the BMP type I receptors ACVR1, BMPR1A and BMPR1B and with the BMP type II receptor ACVR2B. The functional complex with its receptor NEO1/neogenin appears to be a heterotetramer with a 2:2 stoichiometry, RGM molecules acting as staples that bring two NEO1 receptors together without interacting themselves, this arrangement leads to activation of downstream signaling via RhoA. Post-translationally, GPI-anchored. In terms of processing, autocatalytically cleaved at low pH; the two chains remain linked via two disulfide bonds. In terms of tissue distribution, detected in neonatal and adult dorsal root ganglion sensory neurons, spinal cord, and brain (at protein level). Also expressed at high levels in retinal ganglion cells of developing mouse, extending to the optic nerve (at protein level). Expressed in testis, epididymis, ovary, uterus, and pituitary.

It localises to the cell membrane. Its subcellular location is the membrane raft. Its function is as follows. Member of the repulsive guidance molecule (RGM) family that contributes to the patterning of the developing nervous system. Acts as a bone morphogenetic protein (BMP) coreceptor that potentiates BMP signaling. Promotes neuronal adhesion. May inhibit neurite outgrowth. In Mus musculus (Mouse), this protein is Repulsive guidance molecule B.